The following is a 179-amino-acid chain: Large ribosomal subunit protein uL5 (179 aa).

It belongs to the universal ribosomal protein uL5 family. Part of the 50S ribosomal subunit; part of the 5S rRNA/L5/L18/L25 subcomplex. Contacts the 5S rRNA and the P site tRNA. Forms a bridge to the 30S subunit in the 70S ribosome.

In terms of biological role, this is one of the proteins that bind and probably mediate the attachment of the 5S RNA into the large ribosomal subunit, where it forms part of the central protuberance. In the 70S ribosome it contacts protein S13 of the 30S subunit (bridge B1b), connecting the 2 subunits; this bridge is implicated in subunit movement. Contacts the P site tRNA; the 5S rRNA and some of its associated proteins might help stabilize positioning of ribosome-bound tRNAs. This is Large ribosomal subunit protein uL5 from Burkholderia mallei (strain ATCC 23344).